The chain runs to 169 residues: Transcription antitermination protein NusB (169 aa).

Positions 1–23 (MADSKKPAIKKPVPKGDRKANRR) are disordered.

Belongs to the NusB family.

Its function is as follows. Involved in transcription antitermination. Required for transcription of ribosomal RNA (rRNA) genes. Binds specifically to the boxA antiterminator sequence of the ribosomal RNA (rrn) operons. This Rhodopseudomonas palustris (strain HaA2) protein is Transcription antitermination protein NusB.